We begin with the raw amino-acid sequence, 100 residues long: MATVTDPRDIILAPVISEKSYSLLDDNVYTFVVHPDSNKTQIKIAIEKIFSVKVASVNTANRQGKRKRTRTGFGKRKSTKRAIVTLAPGSKPIDLFGAPA.

It belongs to the universal ribosomal protein uL23 family. In terms of assembly, part of the 50S ribosomal subunit. Contacts protein L29, and trigger factor when it is bound to the ribosome.

Its function is as follows. One of the early assembly proteins it binds 23S rRNA. One of the proteins that surrounds the polypeptide exit tunnel on the outside of the ribosome. Forms the main docking site for trigger factor binding to the ribosome. The polypeptide is Large ribosomal subunit protein uL23 (Mycolicibacterium paratuberculosis (strain ATCC BAA-968 / K-10) (Mycobacterium paratuberculosis)).